A 1317-amino-acid polypeptide reads, in one-letter code: Immunoglobulin superfamily member 1 (1317 aa).

A signal peptide spans 1–20 (MMLRTFTLLLLCIWLNPGMT). 5 Ig-like C2-type domains span residues 21–112 (SLAV…KILE), 114–211 (EAPG…KLVV), 216–302 (PKPT…SDIL), 311–398 (PKTW…ATYN), and 400–481 (VELM…HRSK). Topologically, residues 21–499 (SLAVESQPEL…GFLTWNSILN (479 aa)) are extracellular. Residue asparagine 43 is glycosylated (N-linked (GlcNAc...) asparagine). Cysteine 48 and cysteine 96 are oxidised to a cystine. Cysteine 238 and cysteine 286 are joined by a disulfide. Residues asparagine 328 and asparagine 371 are each glycosylated (N-linked (GlcNAc...) asparagine). 2 disulfide bridges follow: cysteine 333/cysteine 382 and cysteine 422/cysteine 465. The chain crosses the membrane as a helical span at residues 500 to 520 (EAVRVSLTMQLASLLLLVVWI). Over 521–531 (RWKCRRLRLRE) the chain is Cytoplasmic. A helical membrane pass occupies residues 532–552 (AWLLGTAQGVAMLFILMALLC). Residues 553 to 1317 (CGLCNGALTE…EVSVELTVPI (765 aa)) are Extracellular-facing. 7 consecutive Ig-like C2-type domains span residues 570–658 (TPKP…ALEL), 659–753 (VGTD…ELVI), 758–850 (PKPF…LVVT), 854–938 (PKPT…SSLS), 946–1041 (TDTF…ELIV), 1046–1131 (PKPS…NHSN), and 1142–1223 (PKPS…EPSD). Cysteines 780 and 830 form a disulfide. Asparagine 871 carries an N-linked (GlcNAc...) asparagine glycan. A disulfide bridge connects residues cysteine 876 and cysteine 923. N-linked (GlcNAc...) asparagine glycosylation is found at asparagine 967 and asparagine 1063. 2 disulfide bridges follow: cysteine 1068–cysteine 1115 and cysteine 1164–cysteine 1207. The segment at 1290–1310 (NQEGEPGTTTNSPSSASQEVS) is disordered. Over residues 1296 to 1309 (GTTTNSPSSASQEV) the composition is skewed to polar residues.

Interacts with INHA; the interaction is not confirmed by standard receptor binding assays. Interacts with ACVR1B; the interaction appears to be ligand-dependent as it is diminished by inhibin B and activin A. Interacts with ACVR2A, ACVR2B, ACVRL1 and BMPR1B. Interacts with HECTD1.

The protein localises to the membrane. It is found in the secreted. In terms of biological role, seems to be a coreceptor in inhibin signaling, but seems not to be a high-affinity inhibin receptor. Antagonizes activin A signaling in the presence or absence of inhibin B. Necessary to mediate a specific antagonistic effect of inhibin B on activin-stimulated transcription. The protein is Immunoglobulin superfamily member 1 (Igsf1) of Mus musculus (Mouse).